We begin with the raw amino-acid sequence, 439 residues long: Rho GTPase-activating protein 1 (439 aa).

The residue at position 1 (methionine 1) is an N-acetylmethionine. Basic and acidic residues predominate over residues 28–48 (IDEKNWPSDEMPDFPKSDDSK). A disordered region spans residues 28-55 (IDEKNWPSDEMPDFPKSDDSKSSSPEPV). Serine 44, serine 47, serine 50, and serine 51 each carry phosphoserine. In terms of domain architecture, CRAL-TRIO spans 63-218 (PYYDIARHQI…QVLKYDDFLK (156 aa)). Phosphotyrosine is present on tyrosine 65. The residue at position 80 (lysine 80) is an N6-acetyllysine. The SH3-binding signature appears at 228 to 238 (PKPMPPRPPLP). Residues 244 to 431 (VSLQHLQEKS…FLLDHQGELF (188 aa)) enclose the Rho-GAP domain.

Found in a complex with XPO7, EIF4A1, ARHGAP1, VPS26A, VPS29, VPS35 and SFN. Interacts with BNIPL.

The protein resides in the cytoplasm. Its function is as follows. GTPase activator for the Rho, Rac and Cdc42 proteins, converting them to the putatively inactive GDP-bound state. Cdc42 seems to be the preferred substrate. This is Rho GTPase-activating protein 1 (Arhgap1) from Mus musculus (Mouse).